Here is a 425-residue protein sequence, read N- to C-terminus: Histidine--tRNA ligase (425 aa).

This sequence belongs to the class-II aminoacyl-tRNA synthetase family. As to quaternary structure, homodimer.

The protein resides in the cytoplasm. It catalyses the reaction tRNA(His) + L-histidine + ATP = L-histidyl-tRNA(His) + AMP + diphosphate + H(+). This Shewanella sp. (strain W3-18-1) protein is Histidine--tRNA ligase.